A 254-amino-acid chain; its full sequence is Small ribosomal subunit protein uS2 (254 aa).

The disordered stretch occupies residues 228–254; sequence DRGAEKEVEAAEEAPAAEAEAAPATEE. Residues 240 to 254 show a composition bias toward low complexity; sequence EAPAAEAEAAPATEE.

This sequence belongs to the universal ribosomal protein uS2 family.

The sequence is that of Small ribosomal subunit protein uS2 from Flavobacterium johnsoniae (strain ATCC 17061 / DSM 2064 / JCM 8514 / BCRC 14874 / CCUG 350202 / NBRC 14942 / NCIMB 11054 / UW101) (Cytophaga johnsonae).